We begin with the raw amino-acid sequence, 393 residues long: Formate-dependent phosphoribosylglycinamide formyltransferase (393 aa).

N(1)-(5-phospho-beta-D-ribosyl)glycinamide contacts are provided by residues 22–23 (EL) and E82. Residues R114, K155, 160–165 (SSGKGQ), 195–198 (EGFI), and E203 contribute to the ATP site. The region spanning 119–308 (RLAAEELKLP…QFALHARAIL (190 aa)) is the ATP-grasp domain. The Mg(2+) site is built by E267 and E279. N(1)-(5-phospho-beta-D-ribosyl)glycinamide is bound by residues D286, K356, and 363–364 (RR).

The protein belongs to the PurK/PurT family. As to quaternary structure, homodimer.

The catalysed reaction is N(1)-(5-phospho-beta-D-ribosyl)glycinamide + formate + ATP = N(2)-formyl-N(1)-(5-phospho-beta-D-ribosyl)glycinamide + ADP + phosphate + H(+). It functions in the pathway purine metabolism; IMP biosynthesis via de novo pathway; N(2)-formyl-N(1)-(5-phospho-D-ribosyl)glycinamide from N(1)-(5-phospho-D-ribosyl)glycinamide (formate route): step 1/1. Its function is as follows. Involved in the de novo purine biosynthesis. Catalyzes the transfer of formate to 5-phospho-ribosyl-glycinamide (GAR), producing 5-phospho-ribosyl-N-formylglycinamide (FGAR). Formate is provided by PurU via hydrolysis of 10-formyl-tetrahydrofolate. This Pseudomonas savastanoi pv. phaseolicola (strain 1448A / Race 6) (Pseudomonas syringae pv. phaseolicola (strain 1448A / Race 6)) protein is Formate-dependent phosphoribosylglycinamide formyltransferase.